A 41-amino-acid chain; its full sequence is Large ribosomal subunit protein bL36 (41 aa).

It belongs to the bacterial ribosomal protein bL36 family.

This chain is Large ribosomal subunit protein bL36, found in Rickettsia africae (strain ESF-5).